Consider the following 187-residue polypeptide: Large ribosomal subunit protein uL5 (187 aa).

Belongs to the universal ribosomal protein uL5 family. Part of the 50S ribosomal subunit; part of the 5S rRNA/L5/L18/L25 subcomplex. Contacts the 5S rRNA and the P site tRNA. Forms a bridge to the 30S subunit in the 70S ribosome.

Its function is as follows. This is one of the proteins that bind and probably mediate the attachment of the 5S RNA into the large ribosomal subunit, where it forms part of the central protuberance. In the 70S ribosome it contacts protein S13 of the 30S subunit (bridge B1b), connecting the 2 subunits; this bridge is implicated in subunit movement. Contacts the P site tRNA; the 5S rRNA and some of its associated proteins might help stabilize positioning of ribosome-bound tRNAs. This is Large ribosomal subunit protein uL5 from Nocardia farcinica (strain IFM 10152).